The chain runs to 114 residues: UPF0342 protein LCABL_19440 (114 aa).

This sequence belongs to the UPF0342 family.

In Lacticaseibacillus casei (strain BL23) (Lactobacillus casei), this protein is UPF0342 protein LCABL_19440.